The following is a 60-amino-acid chain: Large ribosomal subunit protein uL30 (60 aa).

The protein belongs to the universal ribosomal protein uL30 family. As to quaternary structure, part of the 50S ribosomal subunit.

This is Large ribosomal subunit protein uL30 from Paracidovorax citrulli (strain AAC00-1) (Acidovorax citrulli).